The chain runs to 405 residues: Intraflagellar transport protein 57 homolog (405 aa).

Positions 252 to 380 (ETLKTNILEN…AQLNLEVALL (129 aa)) form a coiled coil.

It belongs to the IFT57 family.

It localises to the cytoplasm. Its subcellular location is the cytoskeleton. The protein resides in the cilium basal body. Required for the formation of cilia. This chain is Intraflagellar transport protein 57 homolog, found in Drosophila melanogaster (Fruit fly).